The chain runs to 169 residues: Large ribosomal subunit protein uL10 (169 aa).

The protein belongs to the universal ribosomal protein uL10 family. As to quaternary structure, part of the ribosomal stalk of the 50S ribosomal subunit. The N-terminus interacts with L11 and the large rRNA to form the base of the stalk. The C-terminus forms an elongated spine to which L12 dimers bind in a sequential fashion forming a multimeric L10(L12)X complex.

Functionally, forms part of the ribosomal stalk, playing a central role in the interaction of the ribosome with GTP-bound translation factors. This chain is Large ribosomal subunit protein uL10, found in Staphylococcus saprophyticus subsp. saprophyticus (strain ATCC 15305 / DSM 20229 / NCIMB 8711 / NCTC 7292 / S-41).